We begin with the raw amino-acid sequence, 62 residues long: UPF0434 protein Arad_4458 (62 aa).

Belongs to the UPF0434 family.

This is UPF0434 protein Arad_4458 from Rhizobium rhizogenes (strain K84 / ATCC BAA-868) (Agrobacterium radiobacter).